The following is a 240-amino-acid chain: Octanoyltransferase (240 aa).

A BPL/LPL catalytic domain is found at 31–216 (GQVGDTLLLL…HLCAVFDLEP (186 aa)). Residues 76–83 (RGGGATYH), 145–147 (AIG), and 159–161 (GLA) each bind substrate. Cysteine 177 acts as the Acyl-thioester intermediate in catalysis.

Belongs to the LipB family.

Its subcellular location is the cytoplasm. The enzyme catalyses octanoyl-[ACP] + L-lysyl-[protein] = N(6)-octanoyl-L-lysyl-[protein] + holo-[ACP] + H(+). The protein operates within protein modification; protein lipoylation via endogenous pathway; protein N(6)-(lipoyl)lysine from octanoyl-[acyl-carrier-protein]: step 1/2. Its function is as follows. Catalyzes the transfer of endogenously produced octanoic acid from octanoyl-acyl-carrier-protein onto the lipoyl domains of lipoate-dependent enzymes. Lipoyl-ACP can also act as a substrate although octanoyl-ACP is likely to be the physiological substrate. This Roseiflexus sp. (strain RS-1) protein is Octanoyltransferase.